The following is a 251-amino-acid chain: Adenosylcobinamide-GDP ribazoletransferase (251 aa).

Transmembrane regions (helical) follow at residues 36–56 (LYPF…FVLS), 60–80 (VPIM…TGFL), 110–130 (VGAF…AGMF), 141–161 (VLIF…VSQE), 181–201 (EIIL…TLGI), 202–222 (NYLI…LKVK), and 231–251 (DVAG…LGII).

Belongs to the CobS family. Mg(2+) is required as a cofactor.

The protein localises to the cell membrane. It carries out the reaction alpha-ribazole + adenosylcob(III)inamide-GDP = adenosylcob(III)alamin + GMP + H(+). The enzyme catalyses alpha-ribazole 5'-phosphate + adenosylcob(III)inamide-GDP = adenosylcob(III)alamin 5'-phosphate + GMP + H(+). It participates in cofactor biosynthesis; adenosylcobalamin biosynthesis; adenosylcobalamin from cob(II)yrinate a,c-diamide: step 7/7. Its function is as follows. Joins adenosylcobinamide-GDP and alpha-ribazole to generate adenosylcobalamin (Ado-cobalamin). Also synthesizes adenosylcobalamin 5'-phosphate from adenosylcobinamide-GDP and alpha-ribazole 5'-phosphate. In Clostridium perfringens (strain 13 / Type A), this protein is Adenosylcobinamide-GDP ribazoletransferase.